A 450-amino-acid chain; its full sequence is Cytochrome c1 (450 aa).

The signal sequence occupies residues 1-21 (MTLRNASLTAVAALTVALAGG). Low complexity predominate over residues 24 to 58 (AQDASTAPGTTAPAGSSYHTNEAAPAAADTAPAAE). The tract at residues 24-210 (AQDASTAPGT…AAAQEAGDSH (187 aa)) is disordered. 3 stretches are compositionally biased toward acidic residues: residues 59–77 (AADE…EVTE), 85–108 (PAEE…EPAA), and 118–194 (APAE…EDEA). Heme c-binding residues include C245, C248, and H249. Residues 284 to 305 (PETEEDRPRVPTDHFPTVSGEG) are disordered. Heme c is bound at residue M373. The helical transmembrane segment at 421–435 (SVIFLIVLAALLYLT) threads the bilayer.

In terms of assembly, the main subunits of complex b-c1 are: cytochrome b, cytochrome c1 and the Rieske protein. Post-translationally, binds 1 heme c group covalently per subunit.

The protein resides in the cell membrane. Component of the ubiquinol-cytochrome c reductase complex (complex III or cytochrome b-c1 complex), which is a respiratory chain that generates an electrochemical potential coupled to ATP synthesis. c1 functions as an electron donor to cytochrome c. The protein is Cytochrome c1 (petC) of Paracoccus denitrificans.